The sequence spans 155 residues: NADPH-dependent 7-cyano-7-deazaguanine reductase (155 aa).

Cys-53 serves as the catalytic Thioimide intermediate. Asp-60 functions as the Proton donor in the catalytic mechanism. Substrate-binding positions include 75-77 (VES) and 94-95 (HE).

The protein belongs to the GTP cyclohydrolase I family. QueF type 1 subfamily.

Its subcellular location is the cytoplasm. It catalyses the reaction 7-aminomethyl-7-carbaguanine + 2 NADP(+) = 7-cyano-7-deazaguanine + 2 NADPH + 3 H(+). Its pathway is tRNA modification; tRNA-queuosine biosynthesis. Its function is as follows. Catalyzes the NADPH-dependent reduction of 7-cyano-7-deazaguanine (preQ0) to 7-aminomethyl-7-deazaguanine (preQ1). This is NADPH-dependent 7-cyano-7-deazaguanine reductase from Hyphomonas neptunium (strain ATCC 15444).